The primary structure comprises 300 residues: Tyrosine recombinase XerD (300 aa).

Residues Leu6–Lys89 form the Core-binding (CB) domain. Residues Arg108–His293 enclose the Tyr recombinase domain. Active-site residues include Arg152, Lys174, His245, Arg248, and His271. Tyr280 functions as the O-(3'-phospho-DNA)-tyrosine intermediate in the catalytic mechanism.

It belongs to the 'phage' integrase family. XerD subfamily. As to quaternary structure, forms a cyclic heterotetrameric complex composed of two molecules of XerC and two molecules of XerD.

It is found in the cytoplasm. Functionally, site-specific tyrosine recombinase, which acts by catalyzing the cutting and rejoining of the recombining DNA molecules. The XerC-XerD complex is essential to convert dimers of the bacterial chromosome into monomers to permit their segregation at cell division. It also contributes to the segregational stability of plasmids. This chain is Tyrosine recombinase XerD, found in Chlamydia trachomatis serovar D (strain ATCC VR-885 / DSM 19411 / UW-3/Cx).